Reading from the N-terminus, the 595-residue chain is MTRSPRRPLFAVSLVLSAMLLAGAAHAAVSNEEILQDPKNPQQIVTNGLGVQGQRYSPLDLLNVNNVKELRPVWAFSFGGEKQRGQQAQPLIKDGVMYLTGSYSRVFAVDARTGKKLWQYDARLPDDIRPCCDVINRGVALYGNLVFFGTLDAKLVALNKDTGKVVWSKKVADHKEGYSISAAPMIVNGKLITGVAGGEFGVVGKIQAYNPENGELLWMRPTVEGHMGYVYKDGKAIENGISGGEAGKTWPGDLWKTGGAAPWLGGYYDPETNLILFGTGNPAPWNSHLRPGDNLYSSSRLALNPDDGTIKWHFQSTPHDGWDFDGVNELISFNYKDGGKEVKAAATADRNGFFYVLDRTNGKFIRGFPFVDKITWATGLDKDGRPIYNDASRPGAPGSEAKGSSVFVAPAFLGAKNWMPMAYNKDTGLFYVPSNEWGMDIWNEGIAYKKGAAFLGAGFTIKPLNEDYIGVLRAIDPVSGKEVWRHKNYAPLWGGVLTTKGNLVFTGTPEGFLQAFNAKTGDKVWEFQTGSGVLGSPVTWEMDGEQYVSVVSGWGGAVPLWGGEVAKRVKDFNQGGMLWTFKLPKQLQQTASVKP.

The signal sequence occupies residues 1–27 (MTRSPRRPLFAVSLVLSAMLLAGAAHA). Gln-87 is a pyrroloquinoline quinone binding site. Cys-131 and Cys-132 form a disulfide bridge. Pyrroloquinoline quinone is bound by residues Arg-137, Ser-181, Gly-197, and Gly-198. A Pr(3+)-binding site is contributed by Glu-199. Residue Trp-263 participates in pyrroloquinoline quinone binding. 3 residues coordinate Pr(3+): Asn-281, Asp-323, and Asp-325. Asp-323 serves as the catalytic Proton acceptor. Pyrroloquinoline quinone-binding residues include Arg-350, Asn-417, Trp-493, and Ala-557.

It belongs to the bacterial PQQ dehydrogenase family. It depends on Pr(3+) as a cofactor. The cofactor is Nd(3+). Requires La(3+) as cofactor. Ce(3+) serves as cofactor. Sm(3+) is required as a cofactor. It depends on pyrroloquinoline quinone as a cofactor. In terms of processing, the disulfide ring formed between the two adjacent cysteine residues Cys-131 and Cys-132 is essential for efficient electron transfer at pH 7 from PedH to its natural electron acceptor cytochrome c550.

The protein localises to the periplasm. It catalyses the reaction a primary alcohol + 2 Fe(III)-[cytochrome c] = an aldehyde + 2 Fe(II)-[cytochrome c] + 2 H(+). It carries out the reaction ethanol + 2 Fe(III)-[cytochrome c] = acetaldehyde + 2 Fe(II)-[cytochrome c] + 2 H(+). The enzyme catalyses butan-1-ol + 2 Fe(III)-[cytochrome c] = butanal + 2 Fe(II)-[cytochrome c] + 2 H(+). The catalysed reaction is butan-2-ol + 2 Fe(III)-[cytochrome c] = butan-2-one + 2 Fe(II)-[cytochrome c] + 2 H(+). It catalyses the reaction 2-phenylethanol + 2 Fe(III)-[cytochrome c] = 2-phenylacetaldehyde + 2 Fe(II)-[cytochrome c] + 2 H(+). It carries out the reaction octan-1-ol + 2 Fe(III)-[cytochrome c] = octanal + 2 Fe(II)-[cytochrome c] + 2 H(+). The enzyme catalyses hexan-1-ol + 2 Fe(III)-[cytochrome c] = hexanal + 2 Fe(II)-[cytochrome c] + 2 H(+). The catalysed reaction is cinnamyl alcohol + 2 Fe(III)-[cytochrome c] = cinnamaldehyde + 2 Fe(II)-[cytochrome c] + 2 H(+). It catalyses the reaction farnesol + 2 Fe(III)-[cytochrome c] = farnesal + 2 Fe(II)-[cytochrome c] + 2 H(+). It carries out the reaction an aldehyde + 2 Fe(III)-[cytochrome c] + H2O = a carboxylate + 2 Fe(II)-[cytochrome c] + 3 H(+). The enzyme catalyses acetaldehyde + 2 Fe(III)-[cytochrome c] + H2O = 2 Fe(II)-[cytochrome c] + acetate + 3 H(+). The catalysed reaction is butanal + 2 Fe(III)-[cytochrome c] + H2O = butanoate + 2 Fe(II)-[cytochrome c] + 3 H(+). It catalyses the reaction hexanal + 2 Fe(III)-[cytochrome c] + H2O = hexanoate + 2 Fe(II)-[cytochrome c] + 3 H(+). It carries out the reaction octanal + 2 Fe(III)-[cytochrome c] + H2O = octanoate + 2 Fe(II)-[cytochrome c] + 3 H(+). Alcohol dehydrogenase that catalyzes the oxidation of a range of substrates, including linear and aromatic primary and secondary alcohols, as well as aldehydes, but only in the presence of lanthanides, allowing bacterial growth with a variety of volatile organic compounds (VOCs) as carbon and energy sources. Is also involved in the transcriptional regulation of pedE and pedH, most likely acting as a lanthanide sensory module. Uses a specific inducible cytochrome c550, encoded by the adjacent gene in the locus, as electron acceptor. The polypeptide is Quinoprotein alcohol dehydrogenase PedH (Pseudomonas putida (strain ATCC 47054 / DSM 6125 / CFBP 8728 / NCIMB 11950 / KT2440)).